Here is a 91-residue protein sequence, read N- to C-terminus: Small ribosomal subunit protein bS18 (91 aa).

It belongs to the bacterial ribosomal protein bS18 family. Part of the 30S ribosomal subunit. Forms a tight heterodimer with protein bS6.

Its function is as follows. Binds as a heterodimer with protein bS6 to the central domain of the 16S rRNA, where it helps stabilize the platform of the 30S subunit. This chain is Small ribosomal subunit protein bS18, found in Burkholderia ambifaria (strain MC40-6).